The following is a 689-amino-acid chain: MFERNQKTIFVLDHTRYFSIASEEYISMDFLKGKPSGDGGATGAAGNATGSGGSQFSKSLWTCACESSIEYCRVVWDLFPGKKHVRFIVSDTAAHIVNTWSPSTQNMSHVMNAMVMVGVPSRNLPTSSDYSVIHGLRAAIEALAEPTDEQLAAMADLGTDELSRIPNKGRVICITSARDNTSMKSLEDIFNTVLVQQNTLAAPPAKKGLIIDHCHLVILNIVPLGVESLVTNRSLLKISPLLDVEIHTVSAPDISYKLTHLILNHYDLASTTVTNIPMKEEQNANSSANYDVEILHSRRAHSITCGPDFSLPTSIKQGATYETVTLKWCTPRGCGSADLQPCLGQFLVTPVDVTSRPSSCLINFLLNGRSVLLEMPRKTGSKATSHMLSARGGEIFVHSLCITRSCMDEAPSITDGPGGRVSDYRTAELGQLIKMSRMVPLKVKDPSAPPLTRRLPRYFPLTTSSSILFHLQRHISWLSHFLHLLVKEDMDKQDEVRCQQHIHELYKSASRGDVLPFTHTNGARLKLSKAKDQYRLLYRELEQLIQLNATTMHHKNLLESLQSLRAAYGDAPLKSEPGASLLRSFTESPLSPERLEPISSVGASGSSNSNSLLKASKRRMSSCGQRSLLDIISSAERSQSNKRLDFSGRLCTPLGQVAKLYPDFGTKDKDAVTTGASITPNVKEESVRS.

The stretch at 521 to 550 (NGARLKLSKAKDQYRLLYRELEQLIQLNAT) forms a coiled coil. Disordered regions lie at residues 591-619 (SPER…SKRR) and 665-689 (GTKD…SVRS). Residues 599–614 (SSVGASGSSNSNSLLK) are compositionally biased toward low complexity. The Nuclear localization signal (NLS) motif lies at 613-619 (LKASKRR).

This sequence belongs to the Integrator subunit 13 family. Belongs to the multiprotein complex Integrator, at least composed of IntS1, IntS2, IntS3, IntS4, omd/IntS5, IntS6, defl/IntS7, IntS8, IntS9, IntS10, IntS11, IntS12, asun/IntS13, IntS14 and IntS15. The core complex associates with protein phosphatase 2A subunits mts/PP2A and Pp2A-29B, to form the Integrator-PP2A (INTAC) complex. In terms of processing, phosphorylated.

Its subcellular location is the nucleus. The protein resides in the cytoplasm. It is found in the perinuclear region. Component of the integrator complex, a multiprotein complex that terminates RNA polymerase II (Pol II) transcription in the promoter-proximal region of genes. The integrator complex provides a quality checkpoint during transcription elongation by driving premature transcription termination of transcripts that are unfavorably configured for transcriptional elongation: the complex terminates transcription by (1) catalyzing dephosphorylation of the C-terminal domain (CTD) of Pol II subunit Polr2A/Rbp1 and Spt5, and (2) degrading the exiting nascent RNA transcript via endonuclease activity. The integrator complex is also involved in the 3'-end processing of the U7 snRNA, and also the spliceosomal snRNAs U1, U2, U4 and U5. The protein is Protein asunder (asun) of Drosophila sechellia (Fruit fly).